The chain runs to 306 residues: Agmatinase (306 aa).

Positions 126, 149, 151, 153, 230, and 232 each coordinate Mn(2+).

Belongs to the arginase family. Agmatinase subfamily. The cofactor is Mn(2+).

It carries out the reaction agmatine + H2O = urea + putrescine. The protein operates within amine and polyamine biosynthesis; putrescine biosynthesis via agmatine pathway; putrescine from agmatine: step 1/1. Functionally, catalyzes the formation of putrescine from agmatine. This chain is Agmatinase, found in Shigella boydii serotype 18 (strain CDC 3083-94 / BS512).